Consider the following 233-residue polypeptide: 7-cyano-7-deazaguanine synthase (233 aa).

7 to 17 provides a ligand contact to ATP; that stretch reads LSGGLDSAVTS. 4 residues coordinate Zn(2+): Cys195, Cys206, Cys209, and Cys212.

This sequence belongs to the QueC family. Zn(2+) is required as a cofactor.

The enzyme catalyses 7-carboxy-7-deazaguanine + NH4(+) + ATP = 7-cyano-7-deazaguanine + ADP + phosphate + H2O + H(+). Its pathway is purine metabolism; 7-cyano-7-deazaguanine biosynthesis. In terms of biological role, catalyzes the ATP-dependent conversion of 7-carboxy-7-deazaguanine (CDG) to 7-cyano-7-deazaguanine (preQ(0)). The polypeptide is 7-cyano-7-deazaguanine synthase (Methanococcus maripaludis (strain C7 / ATCC BAA-1331)).